The sequence spans 399 residues: Nicotinate phosphoribosyltransferase (399 aa).

His217 carries the post-translational modification Phosphohistidine; by autocatalysis.

Belongs to the NAPRTase family. Post-translationally, transiently phosphorylated on a His residue during the reaction cycle. Phosphorylation strongly increases the affinity for substrates and increases the rate of nicotinate D-ribonucleotide production. Dephosphorylation regenerates the low-affinity form of the enzyme, leading to product release.

It catalyses the reaction nicotinate + 5-phospho-alpha-D-ribose 1-diphosphate + ATP + H2O = nicotinate beta-D-ribonucleotide + ADP + phosphate + diphosphate. Its pathway is cofactor biosynthesis; NAD(+) biosynthesis; nicotinate D-ribonucleotide from nicotinate: step 1/1. In terms of biological role, catalyzes the synthesis of beta-nicotinate D-ribonucleotide from nicotinate and 5-phospho-D-ribose 1-phosphate at the expense of ATP. The chain is Nicotinate phosphoribosyltransferase from Burkholderia orbicola (strain MC0-3).